Reading from the N-terminus, the 294-residue chain is uncharacterized protein (294 aa).

The disordered stretch occupies residues 259–294 (LNAPTPIPPPITSHAGQEEALKPQRASKGKKAKARK). A compositionally biased stretch (basic residues) spans 283-294 (RASKGKKAKARK).

This is an uncharacterized protein from Homo sapiens (Human).